Consider the following 367-residue polypeptide: Dihydroorotate dehydrogenase (quinone) (367 aa).

FMN contacts are provided by residues alanine 67–lysine 71 and threonine 91. Position 71 (lysine 71) interacts with substrate. A substrate-binding site is contributed by asparagine 116–phenylalanine 120. FMN-binding residues include asparagine 145 and asparagine 178. A substrate-binding site is contributed by asparagine 178. Serine 181 serves as the catalytic Nucleophile. A substrate-binding site is contributed by asparagine 183. Lysine 219 and threonine 247 together coordinate FMN. Asparagine 248–threonine 249 is a substrate binding site. FMN is bound by residues glycine 269, glycine 298, and tyrosine 319 to threonine 320.

The protein belongs to the dihydroorotate dehydrogenase family. Type 2 subfamily. As to quaternary structure, monomer. FMN is required as a cofactor.

The protein resides in the cell membrane. The catalysed reaction is (S)-dihydroorotate + a quinone = orotate + a quinol. It functions in the pathway pyrimidine metabolism; UMP biosynthesis via de novo pathway; orotate from (S)-dihydroorotate (quinone route): step 1/1. Its function is as follows. Catalyzes the conversion of dihydroorotate to orotate with quinone as electron acceptor. The polypeptide is Dihydroorotate dehydrogenase (quinone) (Roseiflexus castenholzii (strain DSM 13941 / HLO8)).